The sequence spans 211 residues: Octanoyltransferase (211 aa).

One can recognise a BPL/LPL catalytic domain in the interval 32–211; that stretch reads DHEPEIIYLV…IQTEFNKIFK (180 aa). Substrate-binding positions include 71-78, 145-147, and 158-160; these read RGGKFTFH, AIG, and GVA. Catalysis depends on Cys176, which acts as the Acyl-thioester intermediate.

It belongs to the LipB family.

The protein localises to the cytoplasm. It catalyses the reaction octanoyl-[ACP] + L-lysyl-[protein] = N(6)-octanoyl-L-lysyl-[protein] + holo-[ACP] + H(+). Its pathway is protein modification; protein lipoylation via endogenous pathway; protein N(6)-(lipoyl)lysine from octanoyl-[acyl-carrier-protein]: step 1/2. Catalyzes the transfer of endogenously produced octanoic acid from octanoyl-acyl-carrier-protein onto the lipoyl domains of lipoate-dependent enzymes. Lipoyl-ACP can also act as a substrate although octanoyl-ACP is likely to be the physiological substrate. The sequence is that of Octanoyltransferase from Rickettsia massiliae (strain Mtu5).